The primary structure comprises 610 residues: ATP-dependent RNA helicase HAS1 (610 aa).

Disordered stretches follow at residues 1–81 (MTAA…AELK) and 112–131 (ALAVADLPSGTSIPTVDDPT). Residues 9–18 (KKRKRKHKAK) are compositionally biased toward basic residues. Residues 51 to 76 (PEVEDVVADASENDVESGAEEDEEQV) are compositionally biased toward acidic residues. A Q motif motif is present at residues 131–159 (TRFDELNLSERTMEAIKTMGFESMTEIQR). The Helicase ATP-binding domain maps to 162–337 (IPPLLSGKDV…RISLKAGPLY (176 aa)). 175–182 (AKTGSGKT) serves as a coordination point for ATP. The DEAD box motif lies at 285–288 (DEAD). The Helicase C-terminal domain maps to 351–521 (GLEQGYVICD…NIQSQLEALI (171 aa)). Residues 584–594 (DKKVEGRREYG) show a composition bias toward basic and acidic residues. The segment at 584–610 (DKKVEGRREYGRQPQQGRRPMKPNKRF) is disordered.

This sequence belongs to the DEAD box helicase family. DDX18/HAS1 subfamily. Associates in the nucleolus with the 60S and pre-60S ribosomal subunits.

Its subcellular location is the nucleus. The protein resides in the nucleolus. The enzyme catalyses ATP + H2O = ADP + phosphate + H(+). Its function is as follows. ATP-dependent RNA helicase involved in 40S ribosomal subunit biogenesis. Required for the processing and cleavage of 35S pre-rRNA at sites A0, A1, and A2, leading to mature 18S rRNA. The chain is ATP-dependent RNA helicase HAS1 (HAS1) from Phaeosphaeria nodorum (strain SN15 / ATCC MYA-4574 / FGSC 10173) (Glume blotch fungus).